We begin with the raw amino-acid sequence, 182 residues long: UPF0301 protein CHU_1773 (182 aa).

The protein belongs to the UPF0301 (AlgH) family.

This is UPF0301 protein CHU_1773 from Cytophaga hutchinsonii (strain ATCC 33406 / DSM 1761 / CIP 103989 / NBRC 15051 / NCIMB 9469 / D465).